Here is a 466-residue protein sequence, read N- to C-terminus: 3-isopropylmalate dehydratase large subunit (466 aa).

C347, C407, and C410 together coordinate [4Fe-4S] cluster.

This sequence belongs to the aconitase/IPM isomerase family. LeuC type 1 subfamily. As to quaternary structure, heterodimer of LeuC and LeuD. Requires [4Fe-4S] cluster as cofactor.

It carries out the reaction (2R,3S)-3-isopropylmalate = (2S)-2-isopropylmalate. It functions in the pathway amino-acid biosynthesis; L-leucine biosynthesis; L-leucine from 3-methyl-2-oxobutanoate: step 2/4. In terms of biological role, catalyzes the isomerization between 2-isopropylmalate and 3-isopropylmalate, via the formation of 2-isopropylmaleate. The sequence is that of 3-isopropylmalate dehydratase large subunit from Klebsiella pneumoniae (strain 342).